The sequence spans 235 residues: Large ribosomal subunit protein uL1 (235 aa).

This sequence belongs to the universal ribosomal protein uL1 family. Part of the 50S ribosomal subunit.

Functionally, binds directly to 23S rRNA. The L1 stalk is quite mobile in the ribosome, and is involved in E site tRNA release. Protein L1 is also a translational repressor protein, it controls the translation of the L11 operon by binding to its mRNA. The polypeptide is Large ribosomal subunit protein uL1 (Arthrobacter sp. (strain FB24)).